We begin with the raw amino-acid sequence, 311 residues long: HPr kinase/phosphorylase (311 aa).

Residues H139 and K160 contribute to the active site. G154–S161 is a binding site for ATP. S161 lines the Mg(2+) pocket. The Proton acceptor; for phosphorylation activity. Proton donor; for dephosphorylation activity role is filled by D178. The tract at residues L202 to D211 is important for the catalytic mechanism of both phosphorylation and dephosphorylation. Mg(2+) is bound at residue E203. The active site involves R244. The segment at P265–R270 is important for the catalytic mechanism of dephosphorylation.

It belongs to the HPrK/P family. In terms of assembly, homohexamer. The cofactor is Mg(2+).

The catalysed reaction is [HPr protein]-L-serine + ATP = [HPr protein]-O-phospho-L-serine + ADP + H(+). It carries out the reaction [HPr protein]-O-phospho-L-serine + phosphate + H(+) = [HPr protein]-L-serine + diphosphate. In terms of biological role, catalyzes the ATP- as well as the pyrophosphate-dependent phosphorylation of a specific serine residue in HPr, a phosphocarrier protein of the phosphoenolpyruvate-dependent sugar phosphotransferase system (PTS). HprK/P also catalyzes the pyrophosphate-producing, inorganic phosphate-dependent dephosphorylation (phosphorolysis) of seryl-phosphorylated HPr (P-Ser-HPr). The two antagonistic activities of HprK/P are regulated by several intracellular metabolites, which change their concentration in response to the absence or presence of rapidly metabolisable carbon sources (glucose, fructose, etc.) in the growth medium. Therefore, by controlling the phosphorylation state of HPr, HPrK/P is a sensor enzyme that plays a major role in the regulation of carbon metabolism and sugar transport: it mediates carbon catabolite repression (CCR), and regulates PTS-catalyzed carbohydrate uptake and inducer exclusion. The sequence is that of HPr kinase/phosphorylase from Exiguobacterium sibiricum (strain DSM 17290 / CCUG 55495 / CIP 109462 / JCM 13490 / 255-15).